Reading from the N-terminus, the 236-residue chain is DNA repair protein RecO (236 aa).

The protein belongs to the RecO family.

Involved in DNA repair and RecF pathway recombination. In Stutzerimonas stutzeri (strain A1501) (Pseudomonas stutzeri), this protein is DNA repair protein RecO.